We begin with the raw amino-acid sequence, 132 residues long: Small ribosomal subunit protein uS8 (132 aa).

Belongs to the universal ribosomal protein uS8 family. In terms of assembly, part of the 30S ribosomal subunit. Contacts proteins S5 and S12.

In terms of biological role, one of the primary rRNA binding proteins, it binds directly to 16S rRNA central domain where it helps coordinate assembly of the platform of the 30S subunit. This is Small ribosomal subunit protein uS8 from Gluconobacter oxydans (strain 621H) (Gluconobacter suboxydans).